The primary structure comprises 48 residues: Small, acid-soluble spore protein O (48 aa).

Positions 1–23 are disordered; sequence MVKRKANHVINGMNDAKSQGKGA.

It belongs to the SspO family.

Its subcellular location is the spore core. The chain is Small, acid-soluble spore protein O from Bacillus velezensis (strain DSM 23117 / BGSC 10A6 / LMG 26770 / FZB42) (Bacillus amyloliquefaciens subsp. plantarum).